A 137-amino-acid chain; its full sequence is Acidic phospholipase A2 1 (137 aa).

The N-terminal stretch at 1–11 (LVAVCVSLLGA) is a signal peptide. Positions 12–19 (ANIPPQPL) are excised as a propeptide. Intrachain disulfides connect cysteine 30/cysteine 89, cysteine 44/cysteine 136, cysteine 46/cysteine 62, cysteine 61/cysteine 117, cysteine 68/cysteine 110, cysteine 78/cysteine 103, and cysteine 96/cysteine 108. 3 residues coordinate Ca(2+): tyrosine 45, glycine 47, and glycine 49. Tridecanoate contacts are provided by glycine 49 and histidine 65. Residue histidine 65 is part of the active site. Aspartate 66 serves as a coordination point for Ca(2+). Residue aspartate 111 is part of the active site.

As to quaternary structure, monomer. Requires Ca(2+) as cofactor. In terms of tissue distribution, expressed by the venom gland.

The protein resides in the secreted. The enzyme catalyses a 1,2-diacyl-sn-glycero-3-phosphocholine + H2O = a 1-acyl-sn-glycero-3-phosphocholine + a fatty acid + H(+). Snake venom phospholipase A2 (PLA2) that shows anticoagulant and neurotoxic activities. PLA2 catalyzes the calcium-dependent hydrolysis of the 2-acyl groups in 3-sn-phosphoglycerides. The protein is Acidic phospholipase A2 1 of Bungarus caeruleus (Indian krait).